We begin with the raw amino-acid sequence, 826 residues long: Ubiquitin carboxyl-terminal hydrolase 16 (826 aa).

The segment at 22 to 142 (PVCRHIRKGL…QVVDYVRKQA (121 aa)) adopts a UBP-type zinc-finger fold. Residues Cys24, His26, Cys48, Cys51, Cys74, Cys77, Cys82, His90, His94, His103, Cys116, and Cys119 each contribute to the Zn(2+) site. Lys140 participates in a covalent cross-link: Glycyl lysine isopeptide (Lys-Gly) (interchain with G-Cter in SUMO2). Residues 144 to 189 (NTTPESAEDNGNIELENKKLEKESKNEQEREKKENMARENPSMNST) form a disordered region. Basic and acidic residues predominate over residues 158-180 (LENKKLEKESKNEQEREKKENMA). Ser188 is subject to Phosphoserine. In terms of domain architecture, USP spans 195–825 (KGLSNLGNTC…QAYLLFYERI (631 aa)). The Nucleophile role is filled by Cys204. A compositionally biased stretch (basic and acidic residues) spans 393 to 407 (SGKKSINDKNLKKTM). Positions 393–458 (SGKKSINDKN…QAKNQRRQQK (66 aa)) are disordered. Residues 408–419 (EDEDKDSEEEKD) show a composition bias toward acidic residues. Ser414 is modified (phosphoserine). The segment covering 420–429 (NDSYLKERND) has biased composition (basic and acidic residues). The span at 437-457 (HLQKKAKKQAKKQAKNQRRQQ) shows a compositional bias: basic residues. Residues Ser530 and Ser551 each carry the phosphoserine modification. The active-site Proton acceptor is the His760.

The protein belongs to the peptidase C19 family. USP16 subfamily. As to quaternary structure, homotetramer. Associates with late pre-40S ribosomes. Interacts with CEP78; promoting deubiquitination of tektins. Post-translationally, phosphorylated at the onset of mitosis and dephosphorylated during the metaphase/anaphase transition. Phosphorylation by AURKB enhances the deubiquitinase activity.

The protein resides in the nucleus. It carries out the reaction Thiol-dependent hydrolysis of ester, thioester, amide, peptide and isopeptide bonds formed by the C-terminal Gly of ubiquitin (a 76-residue protein attached to proteins as an intracellular targeting signal).. Its function is as follows. Specifically deubiquitinates 'Lys-120' of histone H2A (H2AK119Ub), a specific tag for epigenetic transcriptional repression, thereby acting as a coactivator. Deubiquitination of histone H2A is a prerequisite for subsequent phosphorylation at 'Ser-11' of histone H3 (H3S10ph), and is required for chromosome segregation when cells enter into mitosis. In resting B- and T-lymphocytes, phosphorylation by AURKB leads to enhance its activity, thereby maintaining transcription in resting lymphocytes. Regulates Hox gene expression via histone H2A deubiquitination. Prefers nucleosomal substrates. Does not deubiquitinate histone H2B. Also deubiquitinates non-histone proteins, such as ribosomal protein RPS27A: deubiquitination of monoubiquitinated RPS27A promotes maturation of the 40S ribosomal subunit. Also mediates deubiquitination of tektin proteins (TEKT1, TEKT2, TEK3, TEKT4 and TEKT5), promoting their stability. In Bos taurus (Bovine), this protein is Ubiquitin carboxyl-terminal hydrolase 16.